The chain runs to 200 residues: Imidazoleglycerol-phosphate dehydratase (200 aa).

It belongs to the imidazoleglycerol-phosphate dehydratase family.

It is found in the cytoplasm. The enzyme catalyses D-erythro-1-(imidazol-4-yl)glycerol 3-phosphate = 3-(imidazol-4-yl)-2-oxopropyl phosphate + H2O. The protein operates within amino-acid biosynthesis; L-histidine biosynthesis; L-histidine from 5-phospho-alpha-D-ribose 1-diphosphate: step 6/9. In Chlorobium limicola (strain DSM 245 / NBRC 103803 / 6330), this protein is Imidazoleglycerol-phosphate dehydratase.